The chain runs to 628 residues: tRNA (guanine(37)-N(1))-methyltransferase (628 aa).

Residues H265, 303–304, 342–343, and N445 each bind S-adenosyl-L-methionine; these read DL and DG.

The protein belongs to the class I-like SAM-binding methyltransferase superfamily. TRM5/TYW2 family. Monomer.

It is found in the mitochondrion matrix. Its subcellular location is the nucleus. It localises to the cytoplasm. The enzyme catalyses guanosine(37) in tRNA + S-adenosyl-L-methionine = N(1)-methylguanosine(37) in tRNA + S-adenosyl-L-homocysteine + H(+). Its function is as follows. Specifically methylates the N1 position of guanosine-37 in various cytoplasmic and mitochondrial tRNAs. Methylation is not dependent on the nature of the nucleoside 5' of the target nucleoside. This is the first step in the biosynthesis of wybutosine (yW), a modified base adjacent to the anticodon of tRNAs and required for accurate decoding. The protein is tRNA (guanine(37)-N(1))-methyltransferase of Mycosarcoma maydis (Corn smut fungus).